A 120-amino-acid polypeptide reads, in one-letter code: Putative B3 domain-containing protein At3g28853 (120 aa).

Residues 19–120 (INKRLTQSDV…DKSNEVFYII (102 aa)) constitute a DNA-binding region (TF-B3).

The protein resides in the nucleus. The sequence is that of Putative B3 domain-containing protein At3g28853 from Arabidopsis thaliana (Mouse-ear cress).